A 289-amino-acid polypeptide reads, in one-letter code: Aquaporin PIP2-3 (289 aa).

The segment at 1-25 (MAKQDIEASGPEAGEFSAKDYTDPP) is disordered. 2 consecutive transmembrane segments (helical) span residues 43–63 (AVIA…ATVI) and 80–100 (CGGV…FILV). The short motif at 112–114 (NPA) is the NPA 1 element. A run of 3 helical transmembrane segments spans residues 131–151 (LLYI…VKGF), 173–193 (GTGL…VFSA), and 207–227 (VLAP…TIPI). An NPA 2 motif is present at residues 233–235 (NPA). The chain crosses the membrane as a helical span at residues 255–275 (IFWVGPLIGAAIAAAYHQYVL).

Belongs to the MIP/aquaporin (TC 1.A.8) family. PIP (TC 1.A.8.11) subfamily.

It is found in the cell membrane. In terms of biological role, aquaporins facilitate the transport of water and small neutral solutes across cell membranes. The protein is Aquaporin PIP2-3 (PIP2-3) of Zea mays (Maize).